A 272-amino-acid chain; its full sequence is Enoyl-[acyl-carrier-protein] reductase [NADH] 1 (272 aa).

NAD(+)-binding positions include glycine 17, 23–24 (SI), glutamine 44, 68–69 (DV), and isoleucine 96. Residues tyrosine 149 and tyrosine 159 each act as proton acceptor in the active site. NAD(+)-binding positions include lysine 166 and 195–199 (IKTLA).

It belongs to the short-chain dehydrogenases/reductases (SDR) family. FabI subfamily.

The protein resides in the cell inner membrane. It catalyses the reaction a 2,3-saturated acyl-[ACP] + NAD(+) = a (2E)-enoyl-[ACP] + NADH + H(+). Its pathway is lipid metabolism; fatty acid biosynthesis. This Rhizobium meliloti (strain 1021) (Ensifer meliloti) protein is Enoyl-[acyl-carrier-protein] reductase [NADH] 1 (fabI1).